Here is a 314-residue protein sequence, read N- to C-terminus: Hydroxyethylthiazole kinase (314 aa).

Met70 is a binding site for substrate. 2 residues coordinate ATP: Arg145 and Ser217. Position 244 (Gly244) interacts with substrate.

Belongs to the Thz kinase family. Mg(2+) serves as cofactor.

The catalysed reaction is 5-(2-hydroxyethyl)-4-methylthiazole + ATP = 4-methyl-5-(2-phosphooxyethyl)-thiazole + ADP + H(+). The protein operates within cofactor biosynthesis; thiamine diphosphate biosynthesis; 4-methyl-5-(2-phosphoethyl)-thiazole from 5-(2-hydroxyethyl)-4-methylthiazole: step 1/1. In terms of biological role, catalyzes the phosphorylation of the hydroxyl group of 4-methyl-5-beta-hydroxyethylthiazole (THZ). The sequence is that of Hydroxyethylthiazole kinase from Bifidobacterium longum (strain NCC 2705).